We begin with the raw amino-acid sequence, 307 residues long: Potassium channel subfamily K member 7 (307 aa).

The Cytoplasmic segment spans residues methionine 1–tyrosine 10. A helical transmembrane segment spans residues leucine 11–leucine 31. The N-linked (GlcNAc...) asparagine glycan is linked to asparagine 83. Residues leucine 92–glycine 118 constitute an intramembrane region (pore-forming). Residues alanine 120–leucine 140 traverse the membrane as a helical segment. At arginine 141 to alanine 172 the chain is on the cytoplasmic side. A helical membrane pass occupies residues glycine 173 to valine 193. An intramembrane region (pore-forming) is located at residues leucine 199–histidine 227. The helical transmembrane segment at leucine 233–valine 253 threads the bilayer. The Cytoplasmic portion of the chain corresponds to glutamate 254–alanine 307.

This sequence belongs to the two pore domain potassium channel (TC 1.A.1.8) family. As to quaternary structure, homodimer. In terms of tissue distribution, detected in embryo, eye, lung and liver. Weakly expressed in colon, testis, atria, kidney, intestine, bladder, uterus, ovary, salivary gland, thymus and brain stem. Not detected in brain, cerebellum, spinal cord, heart, ventricle, skeletal muscle, liver, placenta and pancreas. In the eye, highly expressed in the retinal ganglion cell layer and inner nuclear layer.

Its subcellular location is the membrane. Its function is as follows. Probable potassium channel subunit. No channel activity observed in vitro as protein remains in the endoplasmic reticulum. May need to associate with an as yet unknown partner in order to reach the plasma membrane. In Mus musculus (Mouse), this protein is Potassium channel subfamily K member 7 (Kcnk7).